The primary structure comprises 394 residues: Flavohemoprotein (394 aa).

Residues 1-138 (MLTQEHINII…LAQVFIDREG (138 aa)) form the Globin domain. His85 provides a ligand contact to heme b. Catalysis depends on charge relay system residues Tyr95 and Glu137. Residues 149 to 394 (GGWRDGRTFV…VFGPHAQLAA (246 aa)) form a reductase region. An FAD-binding FR-type domain is found at 152–262 (RDGRTFVVRE…YAPAGDFFYV (111 aa)). Residues Tyr190 and 206–209 (RQYS) each bind FAD. 274–279 (GVGATP) serves as a coordination point for NADP(+). 385-388 (VFGP) is a binding site for FAD.

This sequence belongs to the globin family. Two-domain flavohemoproteins subfamily. In the C-terminal section; belongs to the flavoprotein pyridine nucleotide cytochrome reductase family. It depends on heme b as a cofactor. Requires FAD as cofactor.

The enzyme catalyses 2 nitric oxide + NADPH + 2 O2 = 2 nitrate + NADP(+) + H(+). It carries out the reaction 2 nitric oxide + NADH + 2 O2 = 2 nitrate + NAD(+) + H(+). Is involved in NO detoxification in an aerobic process, termed nitric oxide dioxygenase (NOD) reaction that utilizes O(2) and NAD(P)H to convert NO to nitrate, which protects the bacterium from various noxious nitrogen compounds. Therefore, plays a central role in the inducible response to nitrosative stress. This chain is Flavohemoprotein (hmp), found in Vibrio cholerae serotype O1 (strain ATCC 39315 / El Tor Inaba N16961).